Consider the following 502-residue polypeptide: Histidine--tRNA ligase (502 aa).

It belongs to the class-II aminoacyl-tRNA synthetase family. As to quaternary structure, homodimer.

Its subcellular location is the cytoplasm. The catalysed reaction is tRNA(His) + L-histidine + ATP = L-histidyl-tRNA(His) + AMP + diphosphate + H(+). In Brucella suis (strain ATCC 23445 / NCTC 10510), this protein is Histidine--tRNA ligase.